We begin with the raw amino-acid sequence, 494 residues long: MFS-type transporter lnaF (494 aa).

Residues 1–51 (MTYDPENAMGEARADAPVEAEKEHEATQTTVKESTLGYDNSSDPSRRDSYR) are disordered. Over residues 12-26 (ARADAPVEAEKEHEA) the composition is skewed to basic and acidic residues. N-linked (GlcNAc...) asparagine glycosylation is found at Asn-40, Asn-58, and Asn-68. The next 10 membrane-spanning stretches (helical) occupy residues 105 to 125 (SLLI…DMFS), 128 to 148 (AGLL…TLAL), 156 to 176 (MLWY…GEYP), 203 to 223 (TLMA…CLIA), 228 to 248 (LPVT…IIMV), 290 to 310 (LAFF…STII), 323 to 343 (AIWQ…GAWL), 354 to 374 (ILGF…FPHL), 383 to 403 (VLYG…IGLI), and 446 to 466 (STFY…WFLP).

It belongs to the major facilitator superfamily. Sugar transporter (TC 2.A.1.1) family.

The protein resides in the cell membrane. Its function is as follows. MFS-type transporter; part of the lna gene cluster that mediates the biosynthesis of diastereomeric piperazines. Lna and lnb clusters encode sets of enzymes that produce overlapping sets of previously undescribed metabolites such as piperazinomycin-like metabolites or morpholine. The lna and lnb biosynthetic pathways appear to be part of a signaling network that controls the formation of sclerotia, a resilient overwintering structure. May be involved in the secretion of the metabolites produced by the lna and lnb clusters. The polypeptide is MFS-type transporter lnaF (Aspergillus flavus (strain ATCC 200026 / FGSC A1120 / IAM 13836 / NRRL 3357 / JCM 12722 / SRRC 167)).